The primary structure comprises 659 residues: Exoribonuclease 2 (659 aa).

The RNB domain occupies 189–532; the sequence is REDLTHLYFT…HRLIKQVLSN (344 aa). Positions 576–658 constitute an S1 motif domain; it reads NVEFDGEIQD…ETRSVVGDVL (83 aa).

It belongs to the RNR ribonuclease family. RNase II subfamily.

Its subcellular location is the cytoplasm. It catalyses the reaction Exonucleolytic cleavage in the 3'- to 5'-direction to yield nucleoside 5'-phosphates.. Its function is as follows. Involved in mRNA degradation. Hydrolyzes single-stranded polyribonucleotides processively in the 3' to 5' direction. The sequence is that of Exoribonuclease 2 from Glaesserella parasuis serovar 5 (strain SH0165) (Haemophilus parasuis).